Reading from the N-terminus, the 551-residue chain is Glucans biosynthesis protein D (551 aa).

The segment at residues 1 to 32 (MNRRRFIKGSMAMAAVCGSSGIASLFSQAAFA) is a signal peptide (tat-type signal).

This sequence belongs to the OpgD/OpgG family. Post-translationally, predicted to be exported by the Tat system. The position of the signal peptide cleavage has not been experimentally proven.

Its subcellular location is the periplasm. It functions in the pathway glycan metabolism; osmoregulated periplasmic glucan (OPG) biosynthesis. Probably involved in the control of the structural glucose backbone of osmoregulated periplasmic glucans (OPGs). This chain is Glucans biosynthesis protein D (mdoD), found in Salmonella typhimurium (strain LT2 / SGSC1412 / ATCC 700720).